The primary structure comprises 139 residues: Putative pre-16S rRNA nuclease (139 aa).

It belongs to the YqgF nuclease family.

It is found in the cytoplasm. In terms of biological role, could be a nuclease involved in processing of the 5'-end of pre-16S rRNA. This is Putative pre-16S rRNA nuclease from Bacillus licheniformis (strain ATCC 14580 / DSM 13 / JCM 2505 / CCUG 7422 / NBRC 12200 / NCIMB 9375 / NCTC 10341 / NRRL NRS-1264 / Gibson 46).